The following is a 358-amino-acid chain: Phospho-N-acetylmuramoyl-pentapeptide-transferase (358 aa).

Helical transmembrane passes span 27–47 (LFNN…SLFA), 81–101 (MGGV…TINL), 106–126 (LFLL…DDYL), 147–167 (VISI…PLVI), 171–191 (SWVI…LVGI), 201–221 (LDGL…TEIL), 228–248 (LFVF…FLKY), 255–275 (IFMG…IALL), 278–298 (SVFT…SVII), and 336–356 (IVEN…VLKI).

It belongs to the glycosyltransferase 4 family. MraY subfamily. The cofactor is Mg(2+).

It is found in the cell inner membrane. The catalysed reaction is UDP-N-acetyl-alpha-D-muramoyl-L-alanyl-gamma-D-glutamyl-meso-2,6-diaminopimeloyl-D-alanyl-D-alanine + di-trans,octa-cis-undecaprenyl phosphate = di-trans,octa-cis-undecaprenyl diphospho-N-acetyl-alpha-D-muramoyl-L-alanyl-D-glutamyl-meso-2,6-diaminopimeloyl-D-alanyl-D-alanine + UMP. The protein operates within cell wall biogenesis; peptidoglycan biosynthesis. Catalyzes the initial step of the lipid cycle reactions in the biosynthesis of the cell wall peptidoglycan: transfers peptidoglycan precursor phospho-MurNAc-pentapeptide from UDP-MurNAc-pentapeptide onto the lipid carrier undecaprenyl phosphate, yielding undecaprenyl-pyrophosphoryl-MurNAc-pentapeptide, known as lipid I. The sequence is that of Phospho-N-acetylmuramoyl-pentapeptide-transferase from Prochlorococcus marinus (strain MIT 9215).